The primary structure comprises 281 residues: MRVLKTIAEVRQHLTEERRLGLSIGFVPTMGALHHGHLALVQKAREMCDRVLVSIFVNPKQFGSHEDFEVYPRDLLSDCTLLNKEAVEYVFAPSVEEMWPLGNDTIVEVEGLSRILMGELRPGHFCGVTSVVAKLFNIVQPDKVFFGEKDFQQLLIIRRMVKDLAFPIEVIGVPILRDSDGVASSSRNQLLTPEDRKAAKIIPESGKAAEKLYRQGERSVDKLCKAVRDILQQELRAIVESVDLRNMETLSAIKGTLDAPAVLLLTVRFGDVRLIDQYILQ.

Residue Met-30–His-37 coordinates ATP. His-37 acts as the Proton donor in catalysis. Gln-61 is a binding site for (R)-pantoate. Residue Gln-61 coordinates beta-alanine. Position 147-150 (Gly-147–Asp-150) interacts with ATP. Gln-153 serves as a coordination point for (R)-pantoate. ATP is bound by residues Leu-176 and Ser-184–Arg-187.

The protein belongs to the pantothenate synthetase family. Homodimer.

The protein resides in the cytoplasm. The catalysed reaction is (R)-pantoate + beta-alanine + ATP = (R)-pantothenate + AMP + diphosphate + H(+). It participates in cofactor biosynthesis; (R)-pantothenate biosynthesis; (R)-pantothenate from (R)-pantoate and beta-alanine: step 1/1. Its function is as follows. Catalyzes the condensation of pantoate with beta-alanine in an ATP-dependent reaction via a pantoyl-adenylate intermediate. The sequence is that of Pantothenate synthetase from Bartonella bacilliformis (strain ATCC 35685 / KC583 / Herrer 020/F12,63).